The chain runs to 83 residues: Mu-theraphotoxin-Hhn2j 3 (83 aa).

An N-terminal signal peptide occupies residues 1–21 (MKALMFLALAGLVLLFVVGYA). Residues 22–48 (SESEEKEFPIELLSKIFAVDVFKGEER) constitute a propeptide that is removed on maturation. 3 disulfide bridges follow: C50-C65, C57-C70, and C64-C77. At L81 the chain carries Leucine amide.

Belongs to the neurotoxin 10 (Hwtx-1) family. 15 (Hntx-3) subfamily. As to quaternary structure, monomer. Expressed by the venom gland.

The protein localises to the secreted. In terms of biological role, lethal neurotoxin. Selectively blocks tetrodotoxin-sensitive voltage-gated sodium channels (Nav). Does not affect tetrodotoxin-resistant voltage-gated sodium channels or calcium channels. In Cyriopagopus hainanus (Chinese bird spider), this protein is Mu-theraphotoxin-Hhn2j 3.